The following is a 335-amino-acid chain: Biotin synthase (335 aa).

The region spanning 51-278 is the Radical SAM core domain; it reads NTVQLSSLLS…LAKVRLSAGR (228 aa). Residues C66, C70, and C73 each contribute to the [4Fe-4S] cluster site. [2Fe-2S] cluster-binding residues include C110, C141, C201, and R273.

This sequence belongs to the radical SAM superfamily. Biotin synthase family. As to quaternary structure, homodimer. [4Fe-4S] cluster serves as cofactor. Requires [2Fe-2S] cluster as cofactor.

It catalyses the reaction (4R,5S)-dethiobiotin + (sulfur carrier)-SH + 2 reduced [2Fe-2S]-[ferredoxin] + 2 S-adenosyl-L-methionine = (sulfur carrier)-H + biotin + 2 5'-deoxyadenosine + 2 L-methionine + 2 oxidized [2Fe-2S]-[ferredoxin]. Its pathway is cofactor biosynthesis; biotin biosynthesis; biotin from 7,8-diaminononanoate: step 2/2. Functionally, catalyzes the conversion of dethiobiotin (DTB) to biotin by the insertion of a sulfur atom into dethiobiotin via a radical-based mechanism. The sequence is that of Biotin synthase from Bordetella bronchiseptica (strain ATCC BAA-588 / NCTC 13252 / RB50) (Alcaligenes bronchisepticus).